We begin with the raw amino-acid sequence, 353 residues long: Alternative oxidase, mitochondrial (353 aa).

The interval 25-45 (FRSTDDEDENNPSTELATDTT) is disordered. Positions 35–45 (NPSTELATDTT) are enriched in polar residues. Residues 153–173 (FLFLESIAGVPGMVAGMIRHL) form a helical membrane-spanning segment. Fe cation contacts are provided by E157, E196, and H199. Residues 217–237 (LLIGQIIFYNLFFISYLISPA) form a helical membrane-spanning segment. Fe cation-binding residues include E247, E301, and H304.

The protein belongs to the alternative oxidase family. Requires Fe cation as cofactor.

Its subcellular location is the mitochondrion inner membrane. Catalyzes cyanide-resistant oxygen consumption. May increase respiration when the cytochrome respiratory pathway is restricted, or in response to low temperatures. The protein is Alternative oxidase, mitochondrial (AOX) of Yarrowia lipolytica (strain CLIB 122 / E 150) (Yeast).